The primary structure comprises 252 residues: Phosphate import ATP-binding protein PstB 2 (252 aa).

The 242-residue stretch at 6 to 247 (ISINDLSVYF…PQHKETEDYI (242 aa)) folds into the ABC transporter domain. An ATP-binding site is contributed by 38–45 (GPSGSGKS).

It belongs to the ABC transporter superfamily. Phosphate importer (TC 3.A.1.7) family. In terms of assembly, the complex is composed of two ATP-binding proteins (PstB), two transmembrane proteins (PstC and PstA) and a solute-binding protein (PstS).

It is found in the cell membrane. The enzyme catalyses phosphate(out) + ATP + H2O = ADP + 2 phosphate(in) + H(+). In terms of biological role, part of the ABC transporter complex PstSACB involved in phosphate import. Responsible for energy coupling to the transport system. This Streptococcus thermophilus (strain CNRZ 1066) protein is Phosphate import ATP-binding protein PstB 2.